We begin with the raw amino-acid sequence, 395 residues long: Phosphoglycerate kinase (395 aa).

Substrate is bound by residues D21–N23, R36, H59–R62, R114, and R147. Residues K198, E320, and G346–T349 each bind ATP.

It belongs to the phosphoglycerate kinase family. Monomer.

The protein resides in the cytoplasm. It carries out the reaction (2R)-3-phosphoglycerate + ATP = (2R)-3-phospho-glyceroyl phosphate + ADP. Its pathway is carbohydrate degradation; glycolysis; pyruvate from D-glyceraldehyde 3-phosphate: step 2/5. The chain is Phosphoglycerate kinase from Nitrosospira multiformis (strain ATCC 25196 / NCIMB 11849 / C 71).